The chain runs to 895 residues: Alanine--tRNA ligase (895 aa).

Zn(2+)-binding residues include H577, H581, C680, and H684.

Belongs to the class-II aminoacyl-tRNA synthetase family. The cofactor is Zn(2+).

Its subcellular location is the cytoplasm. The enzyme catalyses tRNA(Ala) + L-alanine + ATP = L-alanyl-tRNA(Ala) + AMP + diphosphate. In terms of biological role, catalyzes the attachment of alanine to tRNA(Ala) in a two-step reaction: alanine is first activated by ATP to form Ala-AMP and then transferred to the acceptor end of tRNA(Ala). Also edits incorrectly charged Ser-tRNA(Ala) and Gly-tRNA(Ala) via its editing domain. This Kocuria rhizophila (strain ATCC 9341 / DSM 348 / NBRC 103217 / DC2201) protein is Alanine--tRNA ligase.